A 60-amino-acid chain; its full sequence is Short neurotoxin 1 (60 aa).

Cystine bridges form between Cys3–Cys22, Cys17–Cys39, Cys41–Cys52, and Cys53–Cys58.

It belongs to the three-finger toxin family. Short-chain subfamily. Type I alpha-neurotoxin sub-subfamily. Expressed by the venom gland.

Its subcellular location is the secreted. Its function is as follows. Binds to muscle nicotinic acetylcholine receptor (nAChR) and inhibit acetylcholine from binding to the receptor, thereby impairing neuromuscular transmission. This is Short neurotoxin 1 from Hydrophis cyanocinctus (Asian annulated sea snake).